A 454-amino-acid polypeptide reads, in one-letter code: tRNA(Ile)-lysidine synthase (454 aa).

27-32 (SGGSDS) is a binding site for ATP.

The protein belongs to the tRNA(Ile)-lysidine synthase family.

The protein resides in the cytoplasm. The enzyme catalyses cytidine(34) in tRNA(Ile2) + L-lysine + ATP = lysidine(34) in tRNA(Ile2) + AMP + diphosphate + H(+). Functionally, ligates lysine onto the cytidine present at position 34 of the AUA codon-specific tRNA(Ile) that contains the anticodon CAU, in an ATP-dependent manner. Cytidine is converted to lysidine, thus changing the amino acid specificity of the tRNA from methionine to isoleucine. The polypeptide is tRNA(Ile)-lysidine synthase (Mesorhizobium japonicum (strain LMG 29417 / CECT 9101 / MAFF 303099) (Mesorhizobium loti (strain MAFF 303099))).